Reading from the N-terminus, the 122-residue chain is uncharacterized protein (122 aa).

A coiled-coil region spans residues 79 to 114 (VIEDVASAIKEMMESAAKDLDKIEEVIKESLEKYLR).

This is an uncharacterized protein from Archaeoglobus fulgidus (strain ATCC 49558 / DSM 4304 / JCM 9628 / NBRC 100126 / VC-16).